A 385-amino-acid chain; its full sequence is Probable tRNA sulfurtransferase (385 aa).

One can recognise a THUMP domain in the interval 57-160 (DGVIERVKKV…RGNAYVFTDK (104 aa)). ATP contacts are provided by residues 180-181 (ML), 205-206 (YY), Arg-262, Gly-284, and Gln-293.

The protein belongs to the ThiI family.

It is found in the cytoplasm. The enzyme catalyses [ThiI sulfur-carrier protein]-S-sulfanyl-L-cysteine + a uridine in tRNA + 2 reduced [2Fe-2S]-[ferredoxin] + ATP + H(+) = [ThiI sulfur-carrier protein]-L-cysteine + a 4-thiouridine in tRNA + 2 oxidized [2Fe-2S]-[ferredoxin] + AMP + diphosphate. It carries out the reaction [ThiS sulfur-carrier protein]-C-terminal Gly-Gly-AMP + S-sulfanyl-L-cysteinyl-[cysteine desulfurase] + AH2 = [ThiS sulfur-carrier protein]-C-terminal-Gly-aminoethanethioate + L-cysteinyl-[cysteine desulfurase] + A + AMP + 2 H(+). It functions in the pathway cofactor biosynthesis; thiamine diphosphate biosynthesis. Functionally, catalyzes the ATP-dependent transfer of a sulfur to tRNA to produce 4-thiouridine in position 8 of tRNAs, which functions as a near-UV photosensor. Also catalyzes the transfer of sulfur to the sulfur carrier protein ThiS, forming ThiS-thiocarboxylate. This is a step in the synthesis of thiazole, in the thiamine biosynthesis pathway. The sulfur is donated as persulfide by IscS. The sequence is that of Probable tRNA sulfurtransferase from Clostridium perfringens (strain ATCC 13124 / DSM 756 / JCM 1290 / NCIMB 6125 / NCTC 8237 / Type A).